The chain runs to 415 residues: Histidine--tRNA ligase (415 aa).

Belongs to the class-II aminoacyl-tRNA synthetase family. Homodimer.

Its subcellular location is the cytoplasm. It carries out the reaction tRNA(His) + L-histidine + ATP = L-histidyl-tRNA(His) + AMP + diphosphate + H(+). This Gluconacetobacter diazotrophicus (strain ATCC 49037 / DSM 5601 / CCUG 37298 / CIP 103539 / LMG 7603 / PAl5) protein is Histidine--tRNA ligase.